A 213-amino-acid polypeptide reads, in one-letter code: Na(+)-translocating NADH-quinone reductase subunit D (213 aa).

Transmembrane regions (helical) follow at residues 22-42, 43-63, 77-97, 101-121, 131-151, and 183-203; these read LIAILGICSALAVTTTVTTAL, TMGFAVSFVTGCSSFVVSLLR, IIISLFVILIDQFLKAFFFTI, LSVFVGLIITNCIVMGRAESM, FLDGLGSGLGYGWVLVCISII, and LGLMVLAPSAFFLLGIMIWIV.

It belongs to the NqrDE/RnfAE family. In terms of assembly, composed of six subunits; NqrA, NqrB, NqrC, NqrD, NqrE and NqrF.

It localises to the cell inner membrane. The enzyme catalyses a ubiquinone + n Na(+)(in) + NADH + H(+) = a ubiquinol + n Na(+)(out) + NAD(+). NQR complex catalyzes the reduction of ubiquinone-1 to ubiquinol by two successive reactions, coupled with the transport of Na(+) ions from the cytoplasm to the periplasm. NqrA to NqrE are probably involved in the second step, the conversion of ubisemiquinone to ubiquinol. The sequence is that of Na(+)-translocating NADH-quinone reductase subunit D from Chlamydia trachomatis serovar A (strain ATCC VR-571B / DSM 19440 / HAR-13).